The following is a 976-amino-acid chain: Ubiquitin ligase-binding protein BUL1 (976 aa).

The segment at 1–65 (MAKDLNDSGF…SPSLHSPKSW (65 aa)) is disordered. The span at 23-39 (SDFTANSSTTMNVNANT) shows a compositional bias: polar residues. Low complexity predominate over residues 53–64 (SSRSPSLHSPKS). Residues Ser-58 and Ser-70 each carry the phosphoserine modification. 3 disordered regions span residues 82–124 (LAHS…DGDI), 145–196 (PQGN…SSST), and 857–878 (SEDSISHTGNGSSSSPSSASLT). The PY-motif motif lies at 156 to 160 (FPPSY). Low complexity predominate over residues 163–176 (ANNSTATGAAGSSA). Polar residues predominate over residues 177–196 (DLSHQSLSTDALGATRSSST). The span at 862–878 (SHTGNGSSSSPSSASLT) shows a compositional bias: low complexity.

It belongs to the BUL1 family. Component of the RSP5-BUL1/2 ubiquitin ligase complex composed of at least RSP5 and BUL1 or BUL2.

The protein localises to the cytoplasm. It participates in protein modification; protein ubiquitination. Component of a RSP5 ubiquitin ligase complex which specifies polyubiquitination and intracellular trafficking of the general amino acid permease GAP1 as well as other permeases such as PMA1. The RSP5-BUL1/2 complex is also necessary for the heat-shock element (HSE)-mediated gene expression, nitrogen starvation GLN3-dependent transcription and pressure-induced differential regulation of the 2 tryptophan permeases TAT1 and TAT2. The polypeptide is Ubiquitin ligase-binding protein BUL1 (BUL1) (Saccharomyces cerevisiae (strain ATCC 204508 / S288c) (Baker's yeast)).